A 360-amino-acid chain; its full sequence is G-protein coupled receptor 15 (360 aa).

At 1-33 (MDPEETSVYLDYYYATSPNSDIRETHSHVPYTS) the chain is on the extracellular side. A helical membrane pass occupies residues 34-54 (VFLPVFYTAVFLTGVLGNLVL). The Cytoplasmic portion of the chain corresponds to 55-69 (MGALHFKPGSRRLID). Residues 70–90 (IFIINLAASDFIFLVTLPLWV) form a helical membrane-spanning segment. The Extracellular segment spans residues 91 to 120 (DKEASLGLWRTGSFLCKGSSYMISVNMHCS). A helical transmembrane segment spans residues 121–141 (VLLLTCMSVDRYLAIVWPVVS). At 142–149 (RKFRRTDC) the chain is on the cytoplasmic side. Residues 150–170 (AYVVCASIWFISCLLGLPTLL) form a helical membrane-spanning segment. Residues 171 to 192 (SRELTLIDDKPYCAEKKATPIK) lie on the Extracellular side of the membrane. Residues 193-213 (LIWSLVALIFTFFVPLLSIVT) traverse the membrane as a helical segment. Residues 214 to 239 (CYCCIARKLCAHYQQSGKHNKKLKKS) are Cytoplasmic-facing. Residues 240 to 260 (IKIIFIVVAAFLVSWLPFNTF) traverse the membrane as a helical segment. The Extracellular segment spans residues 261-284 (KFLAIVSGLRQEHYLPSAILQLGM). A helical membrane pass occupies residues 285-305 (EVSGPLAFANSCVNPFIYYIF). Topologically, residues 306–360 (DSYIRRAIVHCLCPCLKNYDFGSSTETSDSHLTKALSTFIHAEDFARRRKRSVSL) are cytoplasmic. Ser359 is modified (phosphoserine).

Belongs to the G-protein coupled receptor 1 family. As to quaternary structure, interacts with adapter YWHAE; this interaction promotes ER-to-Golgi transport of GPR15. Interacts with GNAI1; this interaction initiates the signaling pathway. Phosphorylation is necessary for YWHAE binding and efficient surface expression. In terms of processing, O-glycosylated. Sialylated O-glycans in the N-terminal tail inhibits binding of GPR15LG. Post-translationally, sulfation is required for efficient binding of GPR15LG. Highly expressed in lymphoid tissues, including macrophages and peripheral blood mononuclear cells.

The protein resides in the cell membrane. In terms of biological role, g protein-coupled receptor that plays an important role in immune homeostasis. Acts via its natural ligand GPR15LG, a chemokine-like polypeptide strongly expressed in gastrointestinal tissues. GPR15-GPR15LG signaling axis regulates intestinal homeostasis and inflammation through the migration of immune cells. Controls thereby the specific homing of T-cells, particularly FOXP3+ regulatory T-cells (Tregs), to the large intestine lamina propria. Also required for skin localization of thymus-derived dendritic epidermal T-cells. Plays an important role in mediating cytoprotective function as well as angiogenesis of thrombomodulin. Mechanistically, preferentially signals through the Gi/o pathway to inhibit adenylate cyclase activity and activate a phosphatidylinositol-calcium second messenger system that regulates the release of Ca(2+) ions from intracellular stores. (Microbial infection) Acts as an alternative coreceptor with CD4 for HIV-1 infection. The chain is G-protein coupled receptor 15 (GPR15) from Homo sapiens (Human).